A 382-amino-acid polypeptide reads, in one-letter code: Ribosomal RNA large subunit methyltransferase G (382 aa).

This sequence belongs to the methyltransferase superfamily. RlmG family.

The protein localises to the cytoplasm. It carries out the reaction guanosine(1835) in 23S rRNA + S-adenosyl-L-methionine = N(2)-methylguanosine(1835) in 23S rRNA + S-adenosyl-L-homocysteine + H(+). Functionally, specifically methylates the guanine in position 1835 (m2G1835) of 23S rRNA. This Aliivibrio fischeri (strain ATCC 700601 / ES114) (Vibrio fischeri) protein is Ribosomal RNA large subunit methyltransferase G.